A 161-amino-acid polypeptide reads, in one-letter code: Short form salivary protein D7S (161 aa).

Positions 1–18 (MKFPSILLAILLFKPITA) are cleaved as a signal peptide. Cystine bridges form between cysteine 33/cysteine 67, cysteine 47/cysteine 155, and cysteine 109/cysteine 125.

Belongs to the PBP/GOBP family.

The protein resides in the secreted. Functionally, in contrast to the related D7 salivary proteins, does not bind serotonin. This Culex quinquefasciatus (Southern house mosquito) protein is Short form salivary protein D7S.